The primary structure comprises 561 residues: Malto-oligosyltrehalose trehalohydrolase (561 aa).

Position 253–258 (253–258 (RLDAVH)) interacts with substrate. Aspartate 255 acts as the Nucleophile in catalysis. The Proton donor role is filled by glutamate 286. Residues 311–315 (DDFHH) and 379–384 (HDQVGN) contribute to the substrate site.

It belongs to the glycosyl hydrolase 13 family. In terms of assembly, homodimer.

It localises to the cytoplasm. It catalyses the reaction hydrolysis of (1-&gt;4)-alpha-D-glucosidic linkage in 4-alpha-D-[(1-&gt;4)-alpha-D-glucanosyl]n trehalose to yield trehalose and (1-&gt;4)-alpha-D-glucan.. The protein operates within glycan biosynthesis; trehalose biosynthesis. The chain is Malto-oligosyltrehalose trehalohydrolase (treZ) from Saccharolobus solfataricus (strain ATCC 35092 / DSM 1617 / JCM 11322 / P2) (Sulfolobus solfataricus).